The following is a 254-amino-acid chain: Inner membrane protein YabI (254 aa).

Topologically, residues 1–7 (MQALLEH) are periplasmic. Transmembrane regions (helical) follow at residues 8–28 (FITQSTVYSLMAVVLVAFLES) and 29–49 (LALVGLILPGTVLMAGLGALI). The Periplasmic segment spans residues 50-58 (GSGELSFWH). Residues 59–79 (AWLAGIIGCLMGDWISFWLGW) form a helical membrane-spanning segment. Over 80–144 (RFKKPLHRWS…LPVAKFITPN (65 aa)) the chain is Cytoplasmic. The chain crosses the membrane as a helical span at residues 145–165 (IIGCLLWPPFYFLPGILAGAA). Residues 166–178 (IDIPAGMQSGEFK) lie on the Periplasmic side of the membrane. The helical transmembrane segment at 179–199 (WLLLATAVFLWVGGWLCWRLW) threads the bilayer. Residues 200–215 (RSGKATDRLSHYLSRG) are Cytoplasmic-facing. A helical membrane pass occupies residues 216–236 (RLLWLTPLISAIGVVALVVLI). Over 237 to 254 (RHPLMPVYIDILRKVVGV) the chain is Periplasmic.

It belongs to the DedA family.

It localises to the cell inner membrane. This chain is Inner membrane protein YabI (yabI), found in Escherichia coli (strain K12).